The sequence spans 930 residues: Isoleucine--tRNA ligase (930 aa).

The short motif at 57–67 (PYANGNIHVGH) is the 'HIGH' region element. Residue Glu-554 coordinates L-isoleucyl-5'-AMP. The 'KMSKS' region motif lies at 595–599 (KMSKS). Lys-598 provides a ligand contact to ATP. Residues Cys-888, Cys-891, Cys-908, and Cys-911 each coordinate Zn(2+).

The protein belongs to the class-I aminoacyl-tRNA synthetase family. IleS type 1 subfamily. As to quaternary structure, monomer. Zn(2+) serves as cofactor.

It is found in the cytoplasm. The catalysed reaction is tRNA(Ile) + L-isoleucine + ATP = L-isoleucyl-tRNA(Ile) + AMP + diphosphate. Its function is as follows. Catalyzes the attachment of isoleucine to tRNA(Ile). As IleRS can inadvertently accommodate and process structurally similar amino acids such as valine, to avoid such errors it has two additional distinct tRNA(Ile)-dependent editing activities. One activity is designated as 'pretransfer' editing and involves the hydrolysis of activated Val-AMP. The other activity is designated 'posttransfer' editing and involves deacylation of mischarged Val-tRNA(Ile). The polypeptide is Isoleucine--tRNA ligase (Streptococcus pneumoniae (strain CGSP14)).